A 140-amino-acid chain; its full sequence is 3-hydroxyacyl-[acyl-carrier-protein] dehydratase FabZ (140 aa).

H48 is a catalytic residue.

Belongs to the thioester dehydratase family. FabZ subfamily.

The protein resides in the cytoplasm. It carries out the reaction a (3R)-hydroxyacyl-[ACP] = a (2E)-enoyl-[ACP] + H2O. Its function is as follows. Involved in unsaturated fatty acids biosynthesis. Catalyzes the dehydration of short chain beta-hydroxyacyl-ACPs and long chain saturated and unsaturated beta-hydroxyacyl-ACPs. The chain is 3-hydroxyacyl-[acyl-carrier-protein] dehydratase FabZ from Halalkalibacterium halodurans (strain ATCC BAA-125 / DSM 18197 / FERM 7344 / JCM 9153 / C-125) (Bacillus halodurans).